The chain runs to 356 residues: Uroporphyrinogen decarboxylase (356 aa).

Substrate contacts are provided by residues R27 to R31, D77, Y154, T209, and H327.

This sequence belongs to the uroporphyrinogen decarboxylase family. In terms of assembly, homodimer.

It is found in the cytoplasm. It carries out the reaction uroporphyrinogen III + 4 H(+) = coproporphyrinogen III + 4 CO2. It participates in porphyrin-containing compound metabolism; protoporphyrin-IX biosynthesis; coproporphyrinogen-III from 5-aminolevulinate: step 4/4. Its function is as follows. Catalyzes the decarboxylation of four acetate groups of uroporphyrinogen-III to yield coproporphyrinogen-III. This is Uroporphyrinogen decarboxylase from Cellvibrio japonicus (strain Ueda107) (Pseudomonas fluorescens subsp. cellulosa).